A 101-amino-acid polypeptide reads, in one-letter code: NADH-quinone oxidoreductase subunit K (101 aa).

3 consecutive transmembrane segments (helical) span residues 4 to 24 (LGYFLIIGAILFGLGFAGIII), 30 to 50 (IVLLMCIELMLLAVNTNFIAF), and 61 to 81 (IFVFFILTVAAAESAIGLAIL).

Belongs to the complex I subunit 4L family. In terms of assembly, NDH-1 is composed of 14 different subunits. Subunits NuoA, H, J, K, L, M, N constitute the membrane sector of the complex.

The protein resides in the cell inner membrane. The catalysed reaction is a quinone + NADH + 5 H(+)(in) = a quinol + NAD(+) + 4 H(+)(out). NDH-1 shuttles electrons from NADH, via FMN and iron-sulfur (Fe-S) centers, to quinones in the respiratory chain. The immediate electron acceptor for the enzyme in this species is believed to be ubiquinone. Couples the redox reaction to proton translocation (for every two electrons transferred, four hydrogen ions are translocated across the cytoplasmic membrane), and thus conserves the redox energy in a proton gradient. The protein is NADH-quinone oxidoreductase subunit K of Coxiella burnetii (strain CbuG_Q212) (Coxiella burnetii (strain Q212)).